Here is a 141-residue protein sequence, read N- to C-terminus: ATP synthase epsilon chain 1 (141 aa).

Belongs to the ATPase epsilon chain family. In terms of assembly, F-type ATPases have 2 components, CF(1) - the catalytic core - and CF(0) - the membrane proton channel. CF(1) has five subunits: alpha(3), beta(3), gamma(1), delta(1), epsilon(1). CF(0) has three main subunits: a, b and c.

The protein resides in the cell inner membrane. Its function is as follows. Produces ATP from ADP in the presence of a proton gradient across the membrane. The chain is ATP synthase epsilon chain 1 from Paraburkholderia xenovorans (strain LB400).